We begin with the raw amino-acid sequence, 1434 residues long: Ankyrin and armadillo repeat-containing protein (1434 aa).

The chain crosses the membrane as a helical span at residues 309 to 329; sequence IRRGIGYLKLICFLIPFLLSL. ANK repeat units lie at residues 532-561, 569-598, 602-631, 638-667, and 671-701; these read AGYTIFHHAALHNRVSIICQLCNANFKVNQ, QGPTPLHLAAQACSLETTVCLLCSKADYTL, RGWMPIHFAAFYDNVCIIIALCRKDPSLLE, NQCTPLLLAATSGALDTIQYLFSIGANWRK, and KGNNIIHLSVLTFHTEVLKYIIKLNIPELPV. ARM repeat units follow at residues 732–771, 773–812, 814–852, 855–894, 897–936, and 1072–1112; these read DQYWRCILDAGTIPALINLLKSSKIKLQCKTVGLLSNIST, KSAVHALVEAGGIPSLINLLVCDEPEVHSRCAVILYDIAQ, ENKDVIAKYNGIPSLINLLNLNIENVLVNVMNCIRVLCI, ENNQRAVREHKGLPYLIRFLSSDSDVLKAVSSAAIAEVGR, KEIQDAIAMEGAIPPLVALFKGKQISVQMKGAMAVESLAS, and PVSQ…CIVL.

As to expression, ubiquitously expressed with highest level in pancreas and lowest in skeletal muscle.

Its subcellular location is the membrane. The sequence is that of Ankyrin and armadillo repeat-containing protein (ANKAR) from Homo sapiens (Human).